Reading from the N-terminus, the 187-residue chain is Protein GrpE (187 aa).

Residues 1–26 are disordered; sequence MNDLKNAENGPDEADTPQGAPSQEPD.

The protein belongs to the GrpE family. As to quaternary structure, homodimer.

Its subcellular location is the cytoplasm. Its function is as follows. Participates actively in the response to hyperosmotic and heat shock by preventing the aggregation of stress-denatured proteins, in association with DnaK and GrpE. It is the nucleotide exchange factor for DnaK and may function as a thermosensor. Unfolded proteins bind initially to DnaJ; upon interaction with the DnaJ-bound protein, DnaK hydrolyzes its bound ATP, resulting in the formation of a stable complex. GrpE releases ADP from DnaK; ATP binding to DnaK triggers the release of the substrate protein, thus completing the reaction cycle. Several rounds of ATP-dependent interactions between DnaJ, DnaK and GrpE are required for fully efficient folding. This is Protein GrpE from Methylocella silvestris (strain DSM 15510 / CIP 108128 / LMG 27833 / NCIMB 13906 / BL2).